The primary structure comprises 297 residues: rRNA 2'-O-methyltransferase fibrillarin (297 aa).

The interval 1-56 (MRGGFGRGGGGRGGSRGGRGGFGRGGGRGGGRGGGRGGGRGGGRGGGRGGGRGGAG) is disordered. Asymmetric dimethylarginine occurs at positions 2, 7, 12, 16, 19, 24, 28, 32, 36, 40, 44, 48, and 52. S-adenosyl-L-methionine is bound by residues 149-150 (TT), 168-169 (EF), 192-193 (DA), and 212-215 (DVAQ).

This sequence belongs to the methyltransferase superfamily. Fibrillarin family. In terms of assembly, component of box C/D small nucleolar ribonucleoprotein (snoRNP) particles. It is associated with the U3, U8 and U13 small nuclear RNAs. By homology to other fibrillarins, some or all of the N-terminal domain arginines are modified to asymmetric dimethylarginine (DMA).

It is found in the nucleus. Its subcellular location is the nucleolus. The enzyme catalyses L-glutaminyl-[histone H2A] + S-adenosyl-L-methionine = N(5)-methyl-L-glutaminyl-[histone H2A] + S-adenosyl-L-homocysteine + H(+). S-adenosyl-L-methionine-dependent methyltransferase that has the ability to methylate both RNAs and proteins. Involved in pre-rRNA processing. Utilizes the methyl donor S-adenosyl-L-methionine to catalyze the site-specific 2'-hydroxyl methylation of ribose moieties in pre-ribosomal RNA. Site specificity is provided by a guide RNA that base pairs with the substrate. Methylation occurs at a characteristic distance from the sequence involved in base pairing with the guide RNA. Also acts as a protein methyltransferase by mediating methylation of 'Gln-105' of histone H2A (H2AQ105me), a modification that impairs binding of the FACT complex and is specifically present at 35S ribosomal DNA locus. The chain is rRNA 2'-O-methyltransferase fibrillarin from Leishmania major.